The following is a 663-amino-acid chain: Methionine--tRNA ligase (663 aa).

Positions 10–20 match the 'HIGH' region motif; it reads AYTNGPLHLGH. The Zn(2+) site is built by Cys-142, Cys-145, Cys-154, and Cys-157. Positions 323-327 match the 'KMSKS' region motif; sequence KMSTS. Thr-326 is a binding site for ATP. In terms of domain architecture, tRNA-binding spans 563–663; it reads YFTKVDLRVG…REISLGSKIH (101 aa).

This sequence belongs to the class-I aminoacyl-tRNA synthetase family. MetG type 1 subfamily. Homodimer. Zn(2+) is required as a cofactor.

It is found in the cytoplasm. The catalysed reaction is tRNA(Met) + L-methionine + ATP = L-methionyl-tRNA(Met) + AMP + diphosphate. Is required not only for elongation of protein synthesis but also for the initiation of all mRNA translation through initiator tRNA(fMet) aminoacylation. The protein is Methionine--tRNA ligase of Methanococcus vannielii (strain ATCC 35089 / DSM 1224 / JCM 13029 / OCM 148 / SB).